The sequence spans 416 residues: UV excision repair protein RAD23 homolog B (416 aa).

The 79-residue stretch at 1-79 (MQVTLKTLQQ…VVVMVTKPKA (79 aa)) folds into the Ubiquitin-like domain. Low complexity predominate over residues 83-111 (AVPATTQPSSTPSPTAVSSSPAVAAAQAP). The segment at 83-175 (AVPATTQPSS…STPGDSSRSN (93 aa)) is disordered. Positions 112–121 (APTPALPPTS) are enriched in pro residues. The span at 122–143 (TPASTAPASTTASSEPAPAGAT) shows a compositional bias: low complexity. A Phosphothreonine modification is found at Thr-155. Ser-160 and Ser-174 each carry phosphoserine. Residue Thr-186 is modified to Phosphothreonine. One can recognise a UBA 1 domain in the interval 188–228 (QSYENMVTEIMSMGYEREQVIAALRASFNNPDRAVEYLLMG). At Ser-199 the chain carries Phosphoserine. Tyr-202 carries the post-translational modification Phosphotyrosine. The STI1 domain maps to 274 to 317 (HPLEFLRNQPQFQQMRQIIQQNPSLLPALLQQIGRENPQLLQQI). The tract at residues 333–356 (QEAGSQGGGGGGGGGGGGGGGGGI) is disordered. Gly residues predominate over residues 337–356 (SQGGGGGGGGGGGGGGGGGI). The UBA 2 domain occupies 371–411 (PQEKEAIERLKALGFPEGLVIQAYFACEKNENLAANFLLQQ).

It belongs to the RAD23 family. In terms of assembly, component of the XPC complex composed of XPC, RAD23B and CETN2. Interacts with NGLY1 and PSMC1. Interacts with ATXN3. Interacts with AMFR. Interacts with VCP; the interaction is indirect and mediated by NGLY1.

It localises to the nucleus. It is found in the cytoplasm. In terms of biological role, multiubiquitin chain receptor involved in modulation of proteasomal degradation. Binds to polyubiquitin chains. Proposed to be capable to bind simultaneously to the 26S proteasome and to polyubiquitinated substrates and to deliver ubiquitinated proteins to the proteasome. May play a role in endoplasmic reticulum-associated degradation (ERAD) of misfolded glycoproteins by association with PNGase and delivering deglycosylated proteins to the proteasome. Its function is as follows. Involved in global genome nucleotide excision repair (GG-NER) by acting as component of the XPC complex. Cooperatively with Cetn2 appears to stabilize Xpc. May protect Xpc from proteasomal degradation. The XPC complex is proposed to represent the first factor bound at the sites of DNA damage and together with other core recognition factors, Xpa, RPA and the TFIIH complex, is part of the pre-incision (or initial recognition) complex. The XPC complex recognizes a wide spectrum of damaged DNA characterized by distortions of the DNA helix such as single-stranded loops, mismatched bubbles or single-stranded overhangs. The orientation of XPC complex binding appears to be crucial for inducing a productive NER. XPC complex is proposed to recognize and to interact with unpaired bases on the undamaged DNA strand which is followed by recruitment of the TFIIH complex and subsequent scanning for lesions in the opposite strand in a 5'-to-3' direction by the NER machinery. Cyclobutane pyrimidine dimers (CPDs) which are formed upon UV-induced DNA damage esacpe detection by the XPC complex due to a low degree of structural perurbation. Instead they are detected by the UV-DDB complex which in turn recruits and cooperates with the XPC complex in the respective DNA repair. In vitro, the Xpc:Rad23b dimer is sufficient to initiate NER; it preferentially binds to cisplatin and UV-damaged double-stranded DNA and also binds to a variety of chemically and structurally diverse DNA adducts. Xpc:Rad23b contacts DNA both 5' and 3' of a cisplatin lesion with a preference for the 5' side. Xpc:Rad23bB induces a bend in DNA upon binding. Xpc:Rad23b stimulates the activity of DNA glycosylases Tdg and Smug1. This is UV excision repair protein RAD23 homolog B (Rad23b) from Mus musculus (Mouse).